Here is a 512-residue protein sequence, read N- to C-terminus: Probable malate:quinone oxidoreductase (512 aa).

The protein belongs to the MQO family. It depends on FAD as a cofactor.

It catalyses the reaction (S)-malate + a quinone = a quinol + oxaloacetate. It functions in the pathway carbohydrate metabolism; tricarboxylic acid cycle; oxaloacetate from (S)-malate (quinone route): step 1/1. This is Probable malate:quinone oxidoreductase from Rhodococcus erythropolis (strain PR4 / NBRC 100887).